The primary structure comprises 562 residues: Catalase T (562 aa).

Residues H64 and N137 contribute to the active site. A heme-binding site is contributed by Y351.

The protein belongs to the catalase family. Homotetramer. Heme serves as cofactor.

It is found in the cytoplasm. It catalyses the reaction 2 H2O2 = O2 + 2 H2O. In terms of biological role, occurs in almost all aerobically respiring organisms and serves to protect cells from the toxic effects of hydrogen peroxide. This is Catalase T (CTT1) from Saccharomyces cerevisiae (strain ATCC 204508 / S288c) (Baker's yeast).